Consider the following 146-residue polypeptide: uncharacterized protein (146 aa).

The N-acetyltransferase domain occupies 7-146 (LQINYKTDEL…EGHDILIWNP (140 aa)).

This is an uncharacterized protein from Staphylococcus epidermidis (strain ATCC 12228 / FDA PCI 1200).